We begin with the raw amino-acid sequence, 124 residues long: Small ribosomal subunit protein uS13 (124 aa).

The segment covering 103–117 has biased composition (basic residues); it reads KCNARTRKGPRKTVA. The disordered stretch occupies residues 103 to 124; sequence KCNARTRKGPRKTVANKKIETK.

Belongs to the universal ribosomal protein uS13 family. As to quaternary structure, part of the 30S ribosomal subunit. Forms a loose heterodimer with protein S19. Forms two bridges to the 50S subunit in the 70S ribosome.

Functionally, located at the top of the head of the 30S subunit, it contacts several helices of the 16S rRNA. In the 70S ribosome it contacts the 23S rRNA (bridge B1a) and protein L5 of the 50S subunit (bridge B1b), connecting the 2 subunits; these bridges are implicated in subunit movement. Contacts the tRNAs in the A and P-sites. In Malacoplasma penetrans (strain HF-2) (Mycoplasma penetrans), this protein is Small ribosomal subunit protein uS13.